A 117-amino-acid polypeptide reads, in one-letter code: Structural toxin peptide sea anemone type 9a (117 aa).

A signal peptide spans 1–23 (MKTIIAIFSLAAMIVLVRPTPLE). Repeat copies occupy residues 28–56 (TRSIINVPCKKCYKKDSNGVCRKIFGCQE), 57–88 (KRNIIDPPCRKCYKKDSNNKCVRIAGCGNEAV), and 89–117 (KRAIINPQGCARCHKPDPNGKCRKIHGCS). The segment at 29–117 (RSIINVPCKK…GKCRKIHGCS (89 aa)) is 3 X approximate tandem repeats.

Contains 6 disulfide bonds. Expressed outside of acontia.

The protein resides in the secreted. It localises to the nematocyst. Its function is as follows. Putative neurotoxin. This is Structural toxin peptide sea anemone type 9a from Calliactis polypus (Hermit crab anemone).